Reading from the N-terminus, the 474-residue chain is H/ACA ribonucleoprotein complex subunit CBF5 (474 aa).

Aspartate 94 functions as the Nucleophile in the catalytic mechanism. The 76-residue stretch at 265–340 folds into the PUA domain; sequence YKRIVVKDSA…VVAKVKRCIM (76 aa). Disordered stretches follow at residues 356–375 and 390–474; these read QKKK…RANE and NAEP…KSKK. Composition is skewed to basic and acidic residues over residues 361-372 and 400-433; these read MKADGKLDKYGR and KSEE…EKKD. Repeat copies occupy residues 431 to 433, 434 to 436, 437 to 439, 440 to 442, 443 to 445, 446 to 448, 449 to 451, 452 to 454, and 455 to 457. A 9 X 3 AA tandem repeats of K-K-[DE] region spans residues 431-460; that stretch reads KKDKKEKKEKKDKKEKKEKKEKKEKKRKAD. Over residues 434–456 the composition is skewed to basic residues; it reads KKEKKEKKDKKEKKEKKEKKEKK.

The protein belongs to the pseudouridine synthase TruB family. As to quaternary structure, component of the small nucleolar ribonucleoprotein particles containing H/ACA-type snoRNAs (H/ACA snoRNPs).

It is found in the nucleus. Its subcellular location is the nucleolus. The catalysed reaction is uridine in 5S rRNA = pseudouridine in 5S rRNA. It carries out the reaction uridine in snRNA = pseudouridine in snRNA. It catalyses the reaction a uridine in mRNA = a pseudouridine in mRNA. Catalytic subunit of H/ACA small nucleolar ribonucleoprotein (H/ACA snoRNP) complex, which catalyzes pseudouridylation of rRNA. This involves the isomerization of uridine such that the ribose is subsequently attached to C5, instead of the normal N1. Pseudouridine ('psi') residues may serve to stabilize the conformation of rRNAs and play a central role in ribosomal RNA processing. The H/ACA snoRNP complex also mediates pseudouridylation of other types of RNAs. Catalyzes pseudouridylation at position 93 in U2 snRNA. Also catalyzes pseudouridylation of mRNAs; H/ACA-type snoRNAs probably guide pseudouridylation of mRNAs. The chain is H/ACA ribonucleoprotein complex subunit CBF5 (CBF5) from Kluyveromyces lactis (strain ATCC 8585 / CBS 2359 / DSM 70799 / NBRC 1267 / NRRL Y-1140 / WM37) (Yeast).